We begin with the raw amino-acid sequence, 387 residues long: Succinate--CoA ligase [ADP-forming] subunit beta (387 aa).

ATP contacts are provided by residues Lys46, 53-55 (GRG), Glu99, Ala102, and Glu107. Mg(2+) is bound by residues Asn199 and Asp213. Substrate contacts are provided by residues Asn264 and 321 to 323 (GIV).

The protein belongs to the succinate/malate CoA ligase beta subunit family. In terms of assembly, heterotetramer of two alpha and two beta subunits. Mg(2+) is required as a cofactor.

The enzyme catalyses succinate + ATP + CoA = succinyl-CoA + ADP + phosphate. The catalysed reaction is GTP + succinate + CoA = succinyl-CoA + GDP + phosphate. It functions in the pathway carbohydrate metabolism; tricarboxylic acid cycle; succinate from succinyl-CoA (ligase route): step 1/1. Functionally, succinyl-CoA synthetase functions in the citric acid cycle (TCA), coupling the hydrolysis of succinyl-CoA to the synthesis of either ATP or GTP and thus represents the only step of substrate-level phosphorylation in the TCA. The beta subunit provides nucleotide specificity of the enzyme and binds the substrate succinate, while the binding sites for coenzyme A and phosphate are found in the alpha subunit. The chain is Succinate--CoA ligase [ADP-forming] subunit beta from Campylobacter jejuni subsp. doylei (strain ATCC BAA-1458 / RM4099 / 269.97).